The primary structure comprises 343 residues: MGNTVTCCVSPDASPKAGRDRRVAERGEPYQTQVELQETDPGPHLQHISDRDFPSDFNDECNPSDHPQASTIFLSKSQTDVREKRKSNHINHVSPGQLTKKYSSCSTIFLDDSTVSQPNLRSTIKCVTLAIYYHIKNRDSDRSLDIFDEKLHPLTREEVTDDYCKHDPDHKHIYRFVRTLFSAAQLTAECAIVTLVYLERLLTYAEIDICPSNWKRIVLGAILLASKVWDDQAVWNVDYCQILKDITVEDMNEMERHFLELLQFNINVPASVYAKYYFDLRSLADDNNLSFLLEPLSKERAQKLEAISRLCEDKYKDLSKAAMRRSISADNLVGIRRSNAIIS.

A disordered region spans residues 1 to 69; sequence MGNTVTCCVS…ECNPSDHPQA (69 aa). Positions 17 to 28 are enriched in basic and acidic residues; sequence AGRDRRVAERGE. In terms of domain architecture, Cyclin N-terminal spans 145-267; the sequence is DIFDEKLHPL…FLELLQFNIN (123 aa).

The protein belongs to the cyclin family. Cyclin Y subfamily.

The sequence is that of Cyclin-Y-like protein 1-B (ccnyl1-b) from Xenopus laevis (African clawed frog).